A 480-amino-acid polypeptide reads, in one-letter code: Glutamyl-tRNA(Gln) amidotransferase subunit A (480 aa).

Active-site charge relay system residues include lysine 74 and serine 149. Residue serine 173 is the Acyl-ester intermediate of the active site.

Belongs to the amidase family. GatA subfamily. As to quaternary structure, heterotrimer of A, B and C subunits.

It catalyses the reaction L-glutamyl-tRNA(Gln) + L-glutamine + ATP + H2O = L-glutaminyl-tRNA(Gln) + L-glutamate + ADP + phosphate + H(+). Allows the formation of correctly charged Gln-tRNA(Gln) through the transamidation of misacylated Glu-tRNA(Gln) in organisms which lack glutaminyl-tRNA synthetase. The reaction takes place in the presence of glutamine and ATP through an activated gamma-phospho-Glu-tRNA(Gln). The chain is Glutamyl-tRNA(Gln) amidotransferase subunit A from Vesicomyosocius okutanii subsp. Calyptogena okutanii (strain HA).